The chain runs to 320 residues: GMP reductase (320 aa).

The active-site Thioimidate intermediate is the Cys-174. NADP(+) is bound at residue 203–226 (IIADGGLRVHGDIAKSIRMGASFC).

The protein belongs to the IMPDH/GMPR family. GuaC type 2 subfamily.

The catalysed reaction is IMP + NH4(+) + NADP(+) = GMP + NADPH + 2 H(+). Functionally, catalyzes the irreversible NADPH-dependent deamination of GMP to IMP. It functions in the conversion of nucleobase, nucleoside and nucleotide derivatives of G to A nucleotides, and in maintaining the intracellular balance of A and G nucleotides. In Mycoplasma mycoides subsp. mycoides SC (strain CCUG 32753 / NCTC 10114 / PG1), this protein is GMP reductase.